The sequence spans 321 residues: G-protein coupled receptor homolog ECRF3 (321 aa).

The Extracellular portion of the chain corresponds to 1–34; the sequence is MEVKLDFSSEDFSNYSYNYSGDIYYGDVAPCVVN. Residues Asn14 and Asn18 are each glycosylated (N-linked (GlcNAc...) asparagine; by host). Residues 35 to 51 form a helical membrane-spanning segment; the sequence is FLISESALAFIYVLMFL. At 52–76 the chain is on the cytoplasmic side; sequence CNAIGNSLVLRTFLKYRAQAQSFDY. A helical membrane pass occupies residues 77 to 93; the sequence is LMMGFCLNSLFLAGYLL. Over 94–124 the chain is Extracellular; it reads MRLLRMFEIFMNTELCKLEAFFLNLSIYWSP. An N-linked (GlcNAc...) asparagine; by host glycan is attached at Asn117. A helical transmembrane segment spans residues 125–141; it reads FILVFISVLRCLLIFCA. Residues 142 to 149 are Cytoplasmic-facing; sequence TRLWVKKT. The helical transmembrane segment at 150–166 threads the bilayer; sequence LIGQVFLCCSFVLACFG. Over 167-196 the chain is Extracellular; sequence ALPHVMVTSYYEPSSCIEEDGVLTEQLRTK. Residues 197–215 traverse the membrane as a helical segment; that stretch reads LNTFHTWYSFAGPLFITVI. At 216–234 the chain is on the cytoplasmic side; the sequence is CYSMSCYKLFKTKLSKRAE. Residues 235-251 traverse the membrane as a helical segment; that stretch reads VVTIITMTTLLFIVFCI. Residues 252 to 286 are Extracellular-facing; it reads PYYIMESIDTLLRVGVIEETCAKRSAIVYGIQCTY. A helical transmembrane segment spans residues 287-303; the sequence is MLLVLYYCMLPLMFAMF. Over 304 to 321 the chain is Cytoplasmic; it reads GSLFRQRMAAWCKTICHC.

This sequence belongs to the G-protein coupled receptor 1 family.

It is found in the host cell membrane. In terms of biological role, may be highly relevant to the process of cellular transformation and rapid T-cell proliferation effected by HVS during latent infections of T-cells in susceptible hosts. The chain is G-protein coupled receptor homolog ECRF3 (74) from Saimiri sciureus (Common squirrel monkey).